The primary structure comprises 479 residues: mRNA export factor ICP27 homolog (479 aa).

Low complexity predominate over residues 1 to 15 (MVPSQRLSRTSSISS). 2 disordered regions span residues 1-77 (MVPS…PSSV) and 91-210 (KKWD…NKPW). Residues 35–44 (TDCDMDPMEG) show a composition bias toward acidic residues. Over residues 132 to 142 (EVHGCTDESYG) the composition is skewed to basic and acidic residues. Zn(2+) contacts are provided by cysteine 354, histidine 445, cysteine 449, and cysteine 454. A CHC2-type zinc finger spans residues 354-454 (CFLPNTRDYN…HTRDCRSASC (101 aa)).

This sequence belongs to the HHV-1 ICP27 protein family. In terms of assembly, interacts with host XPO1 and with the XPO1 export pathway components small GTPase RAN and nucleoporin NUP214. Interacts with host SPEN, OTT1 and OTT3. Interacts with host SRSF1, SRSF3, SRSF7 and SRPK1. Interacts with host DHX9; this interaction may have an inhibitory effect on virion production. Interacts (via N-terminus) with host NXF1; this interaction plays a role in mRNA export. Phosphorylated by cellular protein kinase CK2.

It localises to the host nucleus. The protein localises to the host cytoplasm. Functionally, promotes the nuclear export of a subset of early and late viral mRNAs by interacting with mRNAs and cellular export proteins. Additionally may prevent the establishment of cellular antiviral state, by acting as an alternative splicing factor for cellular RNAs such as STAT1, resulting in a STAT1 mRNA incapable of producing the STAT1alpha isoform. In Homo sapiens (Human), this protein is mRNA export factor ICP27 homolog.